Consider the following 518-residue polypeptide: Delta(14)-sterol reductase erg24B (518 aa).

N36 is a glycosylation site (N-linked (GlcNAc...) asparagine). The next 6 helical transmembrane spans lie at 110 to 130, 150 to 170, 182 to 202, 294 to 314, 321 to 341, and 355 to 375; these read VTMW…FLPG, AFLS…LYGT, YVQV…FVYL, IVLT…MEPA, VIMD…VPFL, and ELGL…YVIF. NADP(+) is bound by residues K382, R386, L409, W414, and 421–422; that span reads NY. The helical transmembrane segment at 464-484 threads the bilayer; that stretch reads SRGWGMIFTYFYMIYFGVLLL. NADP(+)-binding positions include D490, 494–498, and Y505; that span reads CKRKY.

It belongs to the ERG4/ERG24 family.

It localises to the endoplasmic reticulum membrane. The protein operates within steroid metabolism; ergosterol biosynthesis. Delta(14)-sterol reductase; part of the third module of ergosterol biosynthesis pathway that includes the late steps of the pathway. Catalyzes the reduction of the C14=C15 double bond within 4,4,24-trimethyl ergosta-8,14,24(28)-trienolto produce 4,4-dimethylfecosterol. The third module or late pathway involves the ergosterol synthesis itself through consecutive reactions that mainly occur in the endoplasmic reticulum (ER) membrane. Firstly, the squalene synthase erg9 catalyzes the condensation of 2 farnesyl pyrophosphate moieties to form squalene, which is the precursor of all steroids. Squalene synthase is crucial for balancing the incorporation of farnesyl diphosphate (FPP) into sterol and nonsterol isoprene synthesis. Secondly, squalene is converted into lanosterol by the consecutive action of the squalene epoxidase erg1 and the lanosterol synthase erg7. Then, the delta(24)-sterol C-methyltransferase erg6 methylates lanosterol at C-24 to produce eburicol. Eburicol is the substrate of the sterol 14-alpha demethylase encoded by cyp51A and cyp51B, to yield 4,4,24-trimethyl ergosta-8,14,24(28)-trienol. The C-14 reductase erg24 then reduces the C14=C15 double bond which leads to 4,4-dimethylfecosterol. A sequence of further demethylations at C-4, involving the C-4 demethylation complex containing the C-4 methylsterol oxidases erg25A or erg25B, the sterol-4-alpha-carboxylate 3-dehydrogenase erg26 and the 3-keto-steroid reductase erg27, leads to the production of fecosterol via 4-methylfecosterol. The C-8 sterol isomerase erg2 then catalyzes the reaction which results in unsaturation at C-7 in the B ring of sterols and thus converts fecosterol to episterol. The sterol-C5-desaturase erg3B then catalyzes the introduction of a C-5 double bond in the B ring to produce 5-dehydroepisterol. The 2 other sterol-C5-desaturases, erg3A and erg3C, seem to be less important in ergosterol biosynthesis. The C-22 sterol desaturase erg5 further converts 5-dehydroepisterol into ergosta-5,7,22,24(28)-tetraen-3beta-ol by forming the C-22(23) double bond in the sterol side chain. Finally, ergosta-5,7,22,24(28)-tetraen-3beta-ol is substrate of the C-24(28) sterol reductases erg4A and erg4B to produce ergosterol. Possible alternative sterol biosynthetic pathways might exist from fecosterol to ergosterol, depending on the activities of the erg3 isoforms. The chain is Delta(14)-sterol reductase erg24B from Aspergillus fumigatus (strain ATCC MYA-4609 / CBS 101355 / FGSC A1100 / Af293) (Neosartorya fumigata).